The following is a 297-amino-acid chain: Phosphatidylinositol N-acetylglucosaminyltransferase subunit C (297 aa).

4 consecutive transmembrane segments (helical) span residues 67–87 (VFVV…WLFG), 88–108 (TGLA…GGDG), 153–173 (SVFM…AAIV), and 239–259 (AFGG…LLLF).

This sequence belongs to the PIGC family. Component of the glycosylphosphatidylinositol-N-acetylglucosaminyltransferase (GPI-GnT) complex composed at least by PIGA, PIGC, PIGH, PIGP, PIGQ, PIGY and DPM2. Interacts with PIGQ. Interacts with the heterodimer PIGA:PIGH.

The protein resides in the endoplasmic reticulum membrane. Its pathway is glycolipid biosynthesis; glycosylphosphatidylinositol-anchor biosynthesis. Part of the glycosylphosphatidylinositol-N-acetylglucosaminyltransferase (GPI-GnT) complex that catalyzes the transfer of N-acetylglucosamine from UDP-N-acetylglucosamine to phosphatidylinositol and participates in the first step of GPI biosynthesis. This chain is Phosphatidylinositol N-acetylglucosaminyltransferase subunit C, found in Rattus norvegicus (Rat).